A 333-amino-acid chain; its full sequence is Phosphate acyltransferase (333 aa).

The protein belongs to the PlsX family. Homodimer. Probably interacts with PlsY.

It is found in the cytoplasm. The catalysed reaction is a fatty acyl-[ACP] + phosphate = an acyl phosphate + holo-[ACP]. It functions in the pathway lipid metabolism; phospholipid metabolism. Catalyzes the reversible formation of acyl-phosphate (acyl-PO(4)) from acyl-[acyl-carrier-protein] (acyl-ACP). This enzyme utilizes acyl-ACP as fatty acyl donor, but not acyl-CoA. The sequence is that of Phosphate acyltransferase from Cellvibrio japonicus (strain Ueda107) (Pseudomonas fluorescens subsp. cellulosa).